The following is a 302-amino-acid chain: Protein NEOXANTHIN-DEFICIENT 1 (302 aa).

Functionally, required for neoxanthin biosynthesis. Probably not involved directly in the enzymatic conversion of violaxanthin to neoxanthin. Is necessary but not sufficient for neoxanthin synthesis. The chain is Protein NEOXANTHIN-DEFICIENT 1 from Oryza sativa subsp. japonica (Rice).